We begin with the raw amino-acid sequence, 431 residues long: Galanin-like G-protein coupled receptor npr-9 (431 aa).

Topologically, residues 1–34 (MEFENLTKEEMEQLQKIYDDTISFERKIGIIIPT) are extracellular. N-linked (GlcNAc...) asparagine glycosylation occurs at asparagine 5. Residues 35–55 (IFAVIILVGLVGNALVVIVAF) form a helical membrane-spanning segment. Topologically, residues 56 to 66 (GRQMRNSTNTL) are cytoplasmic. Residues 67–87 (IIGLAISDLMFLLLCVPFTAV) form a helical membrane-spanning segment. At 88–101 (DYAAPTWIFPEWTC) the chain is on the extracellular side. Cysteine 101 and cysteine 182 form a disulfide bridge. A helical membrane pass occupies residues 102–124 (SMINFFQHTSAYCSVWTLTLMAL). At 125 to 143 (DRYLAVVYPVESMTLRTPR) the chain is on the cytoplasmic side. Residues 144 to 164 (NTVIALCFIYIIIIASQIPVG) form a helical membrane-spanning segment. At 165–203 (RMHGIYVYDFIMEKRSTCAILTIATAEATPTMARTYFMT) the chain is on the extracellular side. A helical membrane pass occupies residues 204 to 224 (FNVFGYVLPLGISVVLYGLML). Over 225-268 (RKLWDMPRPGNSQSVGGRNLTNRDSGSSIRRRPEATAAKRKVTR) the chain is Cytoplasmic. The span at 235 to 252 (NSQSVGGRNLTNRDSGSS) shows a compositional bias: polar residues. The tract at residues 235–257 (NSQSVGGRNLTNRDSGSSIRRRP) is disordered. A helical membrane pass occupies residues 269-289 (LVLCVLITWALCWLPLNVCFF). Residues 290 to 298 (MSGLAYPEP) are Extracellular-facing. A helical membrane pass occupies residues 299-319 (LVISHGVIMVIVQIASQVLAY). Topologically, residues 320–431 (TNSCLNPILY…RSKSTRSYNL (112 aa)) are cytoplasmic. Residues 393-414 (SLLKDNSSSATSVQPLRTSIQA) are compositionally biased toward polar residues. A disordered region spans residues 393–431 (SLLKDNSSSATSVQPLRTSIQAKKTKNIGRSKSTRSYNL). Basic residues predominate over residues 415 to 425 (KKTKNIGRSKS).

It belongs to the G-protein coupled receptor 1 family. Exclusively expressed in the AIB interneuron.

Its subcellular location is the cell membrane. In terms of biological role, neuropeptide that controls movement such as roaming, foraging and backwards locomotion or 'reversals' in response to environmental cues such as food availability or volatile odorants such as octanol. Antagonizes AIB interneuron activity to control bacterial colonization and may negatively regulate the expression of immunity-related genes such as pqm-1 and dod-22 in response to infection by P.aeruginosa. The sequence is that of Galanin-like G-protein coupled receptor npr-9 from Caenorhabditis elegans.